We begin with the raw amino-acid sequence, 40 residues long: Photosystem II reaction center protein J (40 aa).

The chain crosses the membrane as a helical span at residues 8–28; the sequence is IPLWIIGTVTGIFGIGLIGIF.

The protein belongs to the PsbJ family. As to quaternary structure, PSII is composed of 1 copy each of membrane proteins PsbA, PsbB, PsbC, PsbD, PsbE, PsbF, PsbH, PsbI, PsbJ, PsbK, PsbL, PsbM, PsbT, PsbX, PsbY, PsbZ, Psb30/Ycf12, at least 3 peripheral proteins of the oxygen-evolving complex and a large number of cofactors. It forms dimeric complexes.

The protein resides in the plastid membrane. Its function is as follows. One of the components of the core complex of photosystem II (PSII). PSII is a light-driven water:plastoquinone oxidoreductase that uses light energy to abstract electrons from H(2)O, generating O(2) and a proton gradient subsequently used for ATP formation. It consists of a core antenna complex that captures photons, and an electron transfer chain that converts photonic excitation into a charge separation. In Cuscuta reflexa (Southern Asian dodder), this protein is Photosystem II reaction center protein J.